The chain runs to 389 residues: Anhydro-N-acetylmuramic acid kinase (389 aa).

11 to 18 is an ATP binding site; it reads GTSLDGVD.

The protein belongs to the anhydro-N-acetylmuramic acid kinase family.

It carries out the reaction 1,6-anhydro-N-acetyl-beta-muramate + ATP + H2O = N-acetyl-D-muramate 6-phosphate + ADP + H(+). Its pathway is amino-sugar metabolism; 1,6-anhydro-N-acetylmuramate degradation. The protein operates within cell wall biogenesis; peptidoglycan recycling. Catalyzes the specific phosphorylation of 1,6-anhydro-N-acetylmuramic acid (anhMurNAc) with the simultaneous cleavage of the 1,6-anhydro ring, generating MurNAc-6-P. Is required for the utilization of anhMurNAc either imported from the medium or derived from its own cell wall murein, and thus plays a role in cell wall recycling. The chain is Anhydro-N-acetylmuramic acid kinase from Albidiferax ferrireducens (strain ATCC BAA-621 / DSM 15236 / T118) (Rhodoferax ferrireducens).